Consider the following 362-residue polypeptide: F-box protein At1g54550 (362 aa).

The region spanning 1–47 is the F-box domain; that stretch reads MATVTDLPDDLVREIFSRVPLTSLRAVRSTCKKWNAISKYDILGKKA.

The protein is F-box protein At1g54550 of Arabidopsis thaliana (Mouse-ear cress).